The sequence spans 95 residues: MGLRYSREVKQRYGEKELEGRIPITLDMPQTLYGRYNCKSCWFANKGLIKCSNHYLCLKCLTAMLSRSDYCGICGGILPKKLVFETTPSAPPYTP.

Residue Gly2 is the site of N-myristoyl glycine; by host attachment. An RING-type; atypical zinc finger spans residues 38-74; sequence CKSCWFANKGLIKCSNHYLCLKCLTAMLSRSDYCGIC. Residues 88–91 carry the PTAP/PSAP motif motif; that stretch reads PSAP.

Belongs to the arenaviridae Z protein family. As to quaternary structure, interacts with protein NP; this interaction probably directs the encapsidated genome to budding sites. Interacts (via RING domain) with polymerase L; this interaction inhibits viral transcription and replication, Z partially blocks the product exit tunnel for the releasing nascent RNA product. Interacts with the glycoprotein complex; this interaction plays a role in virion budding. Interacts with host eIF4E; this interaction results in eIF4E reduced affinity for its substrate, the 5'-m7 G cap structure. Interacts (via late-budding domain) with host TSG101; this interaction is essential for budding and release of viral particles. Interacts with host RPLP0; this interaction may serve to load ribosome-like particles inside the virion. Interacts with host PML; this interaction induces PML bodies redistribution in the cytoplasm upon viral infection. Myristoylation is required for the role of RING finger protein Z in assembly and budding.

The protein localises to the virion. It localises to the host cytoplasm. It is found in the host perinuclear region. Its subcellular location is the host cell membrane. Functionally, plays a crucial role in virion assembly and budding. Expressed late in the virus life cycle, it acts as an inhibitor of viral transcription and RNA synthesis by interacting with the viral polymerase L. Presumably recruits the NP encapsidated genome to cellular membranes at budding sites via direct interaction with NP. Plays critical roles in the final steps of viral release by interacting with host TSG101, a member of the vacuolar protein-sorting pathway and using other cellular host proteins involved in vesicle formation pathway. The budding of the virus progeny occurs after association of protein Z with the viral glycoprotein complex SSP-GP1-GP2 at the cell periphery, step that requires myristoylation of protein Z. Also selectively represses protein production by associating with host eIF4E. In cell-based minigenome assay, has an inhibitory effect on the ribonucleoprotein machinery (vRNP), which is responsible for the replication and transcription of the viral genome. The sequence is that of RING finger protein Z from Bear Canyon mammarenavirus (isolate Mouse/United States/AV A0070039/2000) (BCNV).